A 181-amino-acid chain; its full sequence is Deoxyuridine 5'-triphosphate nucleotidohydrolase (181 aa).

Residues Arg-96–Gly-98, Asn-109, Thr-113–Asp-115, and Lys-123 contribute to the substrate site.

It belongs to the dUTPase family. It depends on Mg(2+) as a cofactor.

It carries out the reaction dUTP + H2O = dUMP + diphosphate + H(+). The protein operates within pyrimidine metabolism; dUMP biosynthesis; dUMP from dCTP (dUTP route): step 2/2. Functionally, this enzyme is involved in nucleotide metabolism: it produces dUMP, the immediate precursor of thymidine nucleotides and it decreases the intracellular concentration of dUTP so that uracil cannot be incorporated into DNA. In Corynebacterium efficiens (strain DSM 44549 / YS-314 / AJ 12310 / JCM 11189 / NBRC 100395), this protein is Deoxyuridine 5'-triphosphate nucleotidohydrolase.